We begin with the raw amino-acid sequence, 203 residues long: A-type ATP synthase subunit E (203 aa).

This sequence belongs to the V-ATPase E subunit family. As to quaternary structure, might form a homodimer. Interacts with subunit H via residues 41-60. The A-type ATPase is composed of subunits A(3), B(3), C, D, E(1 or 2), F, H(2), I and K(x).

The protein localises to the cell membrane. In terms of biological role, component of the A-type ATP synthase that produces ATP from ADP in the presence of a proton gradient across the membrane. The sequence is that of A-type ATP synthase subunit E from Methanocaldococcus jannaschii (strain ATCC 43067 / DSM 2661 / JAL-1 / JCM 10045 / NBRC 100440) (Methanococcus jannaschii).